Here is a 331-residue protein sequence, read N- to C-terminus: Oxygen-evolving enhancer protein 1-2, chloroplastic (331 aa).

The transit peptide at Met1–Phe57 directs the protein to the chloroplast. The N-terminal 27 residues, Ala58–Ala84, are a transit peptide targeting the thylakoid.

It belongs to the PsbO family.

The protein resides in the plastid. The protein localises to the chloroplast thylakoid membrane. In terms of biological role, stabilizes the manganese cluster which is the primary site of water splitting. Regulates dephosphorylation and turnover of the PSII reaction center D1 protein. In Arabidopsis thaliana (Mouse-ear cress), this protein is Oxygen-evolving enhancer protein 1-2, chloroplastic (PSBO2).